A 244-amino-acid polypeptide reads, in one-letter code: EEF1A lysine methyltransferase 2 (244 aa).

The interval 1–27 (MNADAEGHSGAVVPAQSPEGSSAADDF) is disordered. A Phosphoserine modification is found at Ser-21.

The protein belongs to the class I-like SAM-binding methyltransferase superfamily. EFM4 family.

Its subcellular location is the cytoplasm. It is found in the nucleus. It catalyses the reaction L-lysyl-[protein] + 3 S-adenosyl-L-methionine = N(6),N(6),N(6)-trimethyl-L-lysyl-[protein] + 3 S-adenosyl-L-homocysteine + 3 H(+). Its function is as follows. Protein-lysine methyltransferase that selectively catalyzes the trimethylation of EEF1A at 'Lys-318'. This chain is EEF1A lysine methyltransferase 2, found in Mus musculus (Mouse).